A 220-amino-acid chain; its full sequence is Ribosomal RNA large subunit methyltransferase E (220 aa).

Residues Gly-60, Trp-62, Asp-92, Asp-108, and Asp-133 each coordinate S-adenosyl-L-methionine. The active-site Proton acceptor is Lys-173.

Belongs to the class I-like SAM-binding methyltransferase superfamily. RNA methyltransferase RlmE family.

Its subcellular location is the cytoplasm. It carries out the reaction uridine(2552) in 23S rRNA + S-adenosyl-L-methionine = 2'-O-methyluridine(2552) in 23S rRNA + S-adenosyl-L-homocysteine + H(+). Functionally, specifically methylates the uridine in position 2552 of 23S rRNA at the 2'-O position of the ribose in the fully assembled 50S ribosomal subunit. This Paraburkholderia phytofirmans (strain DSM 17436 / LMG 22146 / PsJN) (Burkholderia phytofirmans) protein is Ribosomal RNA large subunit methyltransferase E.